The following is a 227-amino-acid chain: MTAIAPVITIDGPSGAGKGTLCKAMAEALQWHLLDSGAIYRVLALAALHHHVDLASEDALVPLASHLDVRFVSTDGNLEVILEGEDVSGEIRTQEVANAASQVAAFPRVREALLRRQRAFRKAPGLIADGRDMGTVVFPDAPVKIFLDASSEERAHRRMLQLQENGFSVNFERLLAEIKERDDRDRNRAVAPLVPAADALVLDSTRLSIEQVIEKALQYARQKLALA.

An ATP-binding site is contributed by Gly12 to Thr20.

The protein belongs to the cytidylate kinase family. Type 1 subfamily.

The protein resides in the cytoplasm. The enzyme catalyses CMP + ATP = CDP + ADP. It carries out the reaction dCMP + ATP = dCDP + ADP. The protein is Cytidylate kinase of Salmonella choleraesuis (strain SC-B67).